The following is a 262-amino-acid chain: Hydroxyethylthiazole kinase (262 aa).

A substrate-binding site is contributed by methionine 50. Residues arginine 125 and threonine 171 each coordinate ATP. Residue glycine 198 participates in substrate binding.

Belongs to the Thz kinase family. The cofactor is Mg(2+).

It carries out the reaction 5-(2-hydroxyethyl)-4-methylthiazole + ATP = 4-methyl-5-(2-phosphooxyethyl)-thiazole + ADP + H(+). The protein operates within cofactor biosynthesis; thiamine diphosphate biosynthesis; 4-methyl-5-(2-phosphoethyl)-thiazole from 5-(2-hydroxyethyl)-4-methylthiazole: step 1/1. Functionally, catalyzes the phosphorylation of the hydroxyl group of 4-methyl-5-beta-hydroxyethylthiazole (THZ). The protein is Hydroxyethylthiazole kinase of Escherichia coli O81 (strain ED1a).